The following is a 120-amino-acid chain: NAD(P)H-quinone oxidoreductase subunit 3, chloroplastic (120 aa).

3 helical membrane passes run Phe10 to Val30, Met64 to Met84, and Val88 to Leu108.

Belongs to the complex I subunit 3 family. In terms of assembly, NDH is composed of at least 16 different subunits, 5 of which are encoded in the nucleus.

It localises to the plastid. Its subcellular location is the chloroplast thylakoid membrane. It carries out the reaction a plastoquinone + NADH + (n+1) H(+)(in) = a plastoquinol + NAD(+) + n H(+)(out). It catalyses the reaction a plastoquinone + NADPH + (n+1) H(+)(in) = a plastoquinol + NADP(+) + n H(+)(out). Functionally, NDH shuttles electrons from NAD(P)H:plastoquinone, via FMN and iron-sulfur (Fe-S) centers, to quinones in the photosynthetic chain and possibly in a chloroplast respiratory chain. The immediate electron acceptor for the enzyme in this species is believed to be plastoquinone. Couples the redox reaction to proton translocation, and thus conserves the redox energy in a proton gradient. This Ipomoea purpurea (Common morning glory) protein is NAD(P)H-quinone oxidoreductase subunit 3, chloroplastic.